The primary structure comprises 358 residues: MSTAVRSGRVSSWESFCQWVTNTDNRIYVGWFGVLMIPCLLAATICYIIAFIAAPPVDIDGIREPVAGSFLYGNNIISGAVIPSSNAIGLHFYPIWEAATLDEWLYNGGPYQLVVFHFLIGISAYMGRQWELSYRLGMRPWICVAYAAPLSAAMVVFLIYPFGQGSFSDGMPLGISGTFNFMLVFQAEHNILMHPFHMLGVAGVFGGSLFSAMHGSLVTSSLVRETTESESQNYGYKFGQEEETYNIVAAHGYFGRLIFQYASFNNSRSLHFFLAAWPVVGIWFTSMGIATMAFNLNGFNFNQSILDAQGKVVPTWADVLNRANLGMEVMHERNAHNFPLDLATTESAPVALQAPAVG.

The next 3 membrane-spanning stretches (helical) occupy residues 28-45 (YVGWFGVLMIPCLLAATI), 117-132 (HFLIGISAYMGRQWEL), and 141-155 (WICVAYAAPLSAAMV). H117 contacts chlorophyll a. Y125 is a pheophytin a binding site. Residues D169 and E188 each coordinate [CaMn4O5] cluster. The chain crosses the membrane as a helical span at residues 196–217 (FHMLGVAGVFGGSLFSAMHGSL). Residue H197 participates in chlorophyll a binding. Residues H214 and 263-264 (SF) each bind a quinone. H214 lines the Fe cation pocket. Fe cation is bound at residue H271. A helical membrane pass occupies residues 273–287 (FLAAWPVVGIWFTSM). [CaMn4O5] cluster is bound by residues H331, E332, D341, and A343. Positions 344–358 (TTESAPVALQAPAVG) are excised as a propeptide.

The protein belongs to the reaction center PufL/M/PsbA/D family. As to quaternary structure, PSII is composed of 1 copy each of membrane proteins PsbA, PsbB, PsbC, PsbD, PsbE, PsbF, PsbH, PsbI, PsbJ, PsbK, PsbL, PsbM, PsbT, PsbX, PsbY, PsbZ, Psb30/Ycf12, peripheral proteins PsbO, CyanoQ (PsbQ), PsbU, PsbV and a large number of cofactors. It forms dimeric complexes. The D1/D2 heterodimer binds P680, chlorophylls that are the primary electron donor of PSII, and subsequent electron acceptors. It shares a non-heme iron and each subunit binds pheophytin, quinone, additional chlorophylls, carotenoids and lipids. D1 provides most of the ligands for the Mn4-Ca-O5 cluster of the oxygen-evolving complex (OEC). There is also a Cl(-1) ion associated with D1 and D2, which is required for oxygen evolution. The PSII complex binds additional chlorophylls, carotenoids and specific lipids. is required as a cofactor. Tyr-160 forms a radical intermediate that is referred to as redox-active TyrZ, YZ or Y-Z. In terms of processing, C-terminally processed by CtpA; processing is essential to allow assembly of the oxygen-evolving complex and thus photosynthetic growth.

It localises to the cellular thylakoid membrane. The catalysed reaction is 2 a plastoquinone + 4 hnu + 2 H2O = 2 a plastoquinol + O2. Functionally, photosystem II (PSII) is a light-driven water:plastoquinone oxidoreductase that uses light energy to abstract electrons from H(2)O, generating O(2) and a proton gradient subsequently used for ATP formation. It consists of a core antenna complex that captures photons, and an electron transfer chain that converts photonic excitation into a charge separation. The D1/D2 (PsbA/PsbD) reaction center heterodimer binds P680, the primary electron donor of PSII as well as several subsequent electron acceptors. In Synechococcus sp. (strain RCC307), this protein is Photosystem II protein D1 2.